The primary structure comprises 84 residues: Subtilisin-chymotrypsin inhibitor WSCI (84 aa).

Positions 1–12 (MSSVVKKPLGGN) are cleaved as a signal peptide. The disordered stretch occupies residues 1-28 (MSSVVKKPLGGNTDTGDHHNQKTEWPEL). Basic and acidic residues predominate over residues 15 to 25 (TGDHHNQKTEW).

In terms of assembly, monomer.

Its subcellular location is the secreted. Functionally, inhibits B.lichenoformis subtilisin, B.subtilis subtilisin, bovine pancreatic alpha-chymotrypsin and porcine alpha-chymotrypsin with Ki of 3.92 nM, 5.70 nM, 7.24 nM and 9.35 nM respectively. B.lichenoformis subtilisin is inhibited with a molar ratio of 1:0.87. Also inhibits chymotrypsin-like activities from the digestive tracts of the insect larvae T.molitor, P.interpunctella and H.armigera. Does not inhibit bovine pancreatic trypsin, porcine pancreatic elastase, or human leukocyte elastase. This chain is Subtilisin-chymotrypsin inhibitor WSCI, found in Triticum aestivum (Wheat).